The sequence spans 98 residues: MTSTFIITITIFYLGLLGILINRLHFLSILLCLELLLISLFLSLTVWAINANTTFLLTNNLILLTLSACEASAGLSLMVALSRTHNSDLVSTINILQQ.

Helical transmembrane passes span 1 to 21, 29 to 49, and 61 to 81; these read MTSTFIITITIFYLGLLGILI, ILLCLELLLISLFLSLTVWAI, and LILLTLSACEASAGLSLMVAL.

The protein belongs to the complex I subunit 4L family.

It localises to the mitochondrion membrane. The enzyme catalyses a ubiquinone + NADH + 5 H(+)(in) = a ubiquinol + NAD(+) + 4 H(+)(out). Functionally, core subunit of the mitochondrial membrane respiratory chain NADH dehydrogenase (Complex I) that is believed to belong to the minimal assembly required for catalysis. Complex I functions in the transfer of electrons from NADH to the respiratory chain. The immediate electron acceptor for the enzyme is believed to be ubiquinone. This Patiria pectinifera (Starfish) protein is NADH-ubiquinone oxidoreductase chain 4L (ND4L).